The chain runs to 79 residues: Small ribosomal subunit protein bS18 (79 aa).

This sequence belongs to the bacterial ribosomal protein bS18 family. As to quaternary structure, part of the 30S ribosomal subunit. Forms a tight heterodimer with protein bS6.

Binds as a heterodimer with protein bS6 to the central domain of the 16S rRNA, where it helps stabilize the platform of the 30S subunit. The protein is Small ribosomal subunit protein bS18 of Blochmanniella pennsylvanica (strain BPEN).